Reading from the N-terminus, the 657-residue chain is Tyrosine-protein phosphatase vhp-1 (657 aa).

Residues 21–151 (APDTTLVVDC…FAQQYPQLCE (131 aa)) enclose the Rhodanese domain. One can recognise a Tyrosine-protein phosphatase domain in the interval 175-318 (GITLITPNIY…LLEYENVLIK (144 aa)). Residue Cys262 is the Phosphocysteine intermediate of the active site. 3 disordered regions span residues 353–426 (SNCV…MDLG), 539–563 (VPAGSSSISTPSGSQSTPASASSSA), and 581–657 (PAST…PCHQ). The segment covering 366–405 (SPSSPSVSEGSAASEPETSSSAASSSSTASAPPSMPSTSE) has biased composition (low complexity). Positions 406–419 (QGTSSGTVNVNGKR) are enriched in polar residues. Low complexity-rich tracts occupy residues 542–563 (GSSSISTPSGSQSTPASASSSA) and 581–597 (PASTSTPASSTPGTSRA).

It belongs to the protein-tyrosine phosphatase family. Non-receptor class dual specificity subfamily. In terms of assembly, may interact with pmk-3. As to expression, expressed in the pharynx, intestine, neurons and vulval hypodermal cells.

The catalysed reaction is O-phospho-L-tyrosyl-[protein] + H2O = L-tyrosyl-[protein] + phosphate. In terms of biological role, acts preferentially on the c-Jun N-terminal kinase (JNK) and p38 MAPKs. Plays an important role in the heavy metal stress response and in axon regeneration by negatively regulating the kgb-1 (JNK-like) and the pmk-1 (p38-type) MAPK signaling pathways. This chain is Tyrosine-protein phosphatase vhp-1 (vhp-1), found in Caenorhabditis elegans.